The following is a 324-amino-acid chain: Probable cell division protein WhiA (324 aa).

The segment at residues 276–310 is a DNA-binding region (H-T-H motif); the sequence is TLKELGEMMQGGKVSKSGINHRLRKIDEFADKLRN.

This sequence belongs to the WhiA family.

In terms of biological role, involved in cell division and chromosome segregation. This Shouchella clausii (strain KSM-K16) (Alkalihalobacillus clausii) protein is Probable cell division protein WhiA.